The primary structure comprises 88 residues: RNA-binding protein Hfq (88 aa).

The Sm domain occupies 9-68; the sequence is DPYLNVLRKERVPVSIYLVNGIKLQGQVESFDQFVVLLKNTVSQMVYKHAISTVVPSRAV.

It belongs to the Hfq family. Homohexamer.

In terms of biological role, RNA chaperone that binds small regulatory RNA (sRNAs) and mRNAs to facilitate mRNA translational regulation in response to envelope stress, environmental stress and changes in metabolite concentrations. Also binds with high specificity to tRNAs. This Cellvibrio japonicus (strain Ueda107) (Pseudomonas fluorescens subsp. cellulosa) protein is RNA-binding protein Hfq.